A 363-amino-acid chain; its full sequence is 3-isopropylmalate dehydrogenase (363 aa).

Residue 76 to 89 (GPKWDTLPGHLRPE) participates in NAD(+) binding. Residues arginine 96, arginine 106, arginine 134, and aspartate 223 each coordinate substrate. Aspartate 223, aspartate 247, and aspartate 251 together coordinate Mg(2+). 281-293 (GSAPDIAGKGVAN) is a binding site for NAD(+).

This sequence belongs to the isocitrate and isopropylmalate dehydrogenases family. LeuB type 1 subfamily. Homodimer. It depends on Mg(2+) as a cofactor. Mn(2+) is required as a cofactor.

Its subcellular location is the cytoplasm. It carries out the reaction (2R,3S)-3-isopropylmalate + NAD(+) = 4-methyl-2-oxopentanoate + CO2 + NADH. The protein operates within amino-acid biosynthesis; L-leucine biosynthesis; L-leucine from 3-methyl-2-oxobutanoate: step 3/4. In terms of biological role, catalyzes the oxidation of 3-carboxy-2-hydroxy-4-methylpentanoate (3-isopropylmalate) to 3-carboxy-4-methyl-2-oxopentanoate. The product decarboxylates to 4-methyl-2 oxopentanoate. The chain is 3-isopropylmalate dehydrogenase from Halalkalibacterium halodurans (strain ATCC BAA-125 / DSM 18197 / FERM 7344 / JCM 9153 / C-125) (Bacillus halodurans).